We begin with the raw amino-acid sequence, 575 residues long: Probable methionine--tRNA ligase, mitochondrial (575 aa).

Positions phenylalanine 52–histidine 62 match the 'HIGH' region motif. The short motif at lysine 352–serine 356 is the 'KMSKS' region element. Lysine 355 provides a ligand contact to ATP.

It belongs to the class-I aminoacyl-tRNA synthetase family.

It localises to the mitochondrion matrix. The enzyme catalyses tRNA(Met) + L-methionine + ATP = L-methionyl-tRNA(Met) + AMP + diphosphate. This is Probable methionine--tRNA ligase, mitochondrial (mmetS) from Dictyostelium discoideum (Social amoeba).